Here is a 276-residue protein sequence, read N- to C-terminus: D-aminoacyl-tRNA deacylase (276 aa).

Belongs to the DtdA deacylase family. In terms of assembly, monomer. Zn(2+) is required as a cofactor.

It carries out the reaction a D-aminoacyl-tRNA + H2O = a tRNA + a D-alpha-amino acid + H(+). It catalyses the reaction glycyl-tRNA(Ala) + H2O = tRNA(Ala) + glycine + H(+). D-aminoacyl-tRNA deacylase with broad substrate specificity. By recycling D-aminoacyl-tRNA to D-amino acids and free tRNA molecules, this enzyme counteracts the toxicity associated with the formation of D-aminoacyl-tRNA entities in vivo. This is D-aminoacyl-tRNA deacylase from Staphylothermus marinus (strain ATCC 43588 / DSM 3639 / JCM 9404 / F1).